A 311-amino-acid chain; its full sequence is Olfactory receptor 5M8 (311 aa).

Residues 1–24 (MRRNCTLVTEFILLGLTSRRELQI) are Extracellular-facing. The N-linked (GlcNAc...) asparagine glycan is linked to Asn4. Residues 25 to 45 (LLFTLFLAIYMVTVAGNLGMI) traverse the membrane as a helical segment. Topologically, residues 46–53 (VLIQANAW) are cytoplasmic. A helical transmembrane segment spans residues 54 to 74 (LHMPMYFFLSHLSFVDLCFSS). Residues 75 to 98 (NVTPKMLEIFLSEKKSISYPACLV) lie on the Extracellular side of the membrane. A disulfide bond links Cys96 and Cys188. Residues 99 to 119 (QCYLFIALVHVEIYILAVMAF) form a helical membrane-spanning segment. Over 120–138 (DRYMAICNPLLYGSRMSKS) the chain is Cytoplasmic. The helical transmembrane segment at 139-159 (VCSFLITVPYVYGALTGLMET) threads the bilayer. The Extracellular segment spans residues 160–195 (MWTYNLAFCGPNEINHFYCADPPLIKLACSDTYNKE). The helical transmembrane segment at 196–216 (LSMFIVAGWNLSFSLFIICIS) threads the bilayer. Over 217 to 236 (YLYIFPAILKIRSTEGRQKA) the chain is Cytoplasmic. The helical transmembrane segment at 237–257 (FSTCGSHLTAVTIFYATLFFM) threads the bilayer. Topologically, residues 258–270 (YLRPPSKESVEQG) are extracellular. A helical membrane pass occupies residues 271–291 (KMVAVFYTTVIPMLNLIIYSL). Residues 292–311 (RNKNVKEALIKELSMKIYFS) lie on the Cytoplasmic side of the membrane.

The protein belongs to the G-protein coupled receptor 1 family.

The protein localises to the cell membrane. In terms of biological role, odorant receptor. This is Olfactory receptor 5M8 (OR5M8) from Homo sapiens (Human).